Reading from the N-terminus, the 344-residue chain is Neurotrimin (344 aa).

Residues 1–33 (MGVCGYLFLPWKCLVVVSLRLLFLVPTGVPVRS) form the signal peptide. 3 Ig-like C2-type domains span residues 39 to 126 (PKAM…PKTS), 136 to 218 (PKIV…VKVT), and 222 to 309 (PPYI…ASIM). N44, N70, and N152 each carry an N-linked (GlcNAc...) asparagine glycan. A disulfide bridge connects residues C57 and C115. 2 disulfide bridges follow: C157/C201 and C243/C295. N-linked (GlcNAc...) asparagine glycans are attached at residues N284, N292, and N305. The GPI-anchor amidated asparagine; alternate moiety is linked to residue N321. An N-linked (GlcNAc...) asparagine; alternate glycan is attached at N321. Residues 322 to 344 (GTSRRAGCIWLLPLLVLHLLLKF) constitute a propeptide, removed in mature form.

Belongs to the immunoglobulin superfamily. IgLON family.

Its subcellular location is the cell membrane. Its function is as follows. Neural cell adhesion molecule. The polypeptide is Neurotrimin (Ntm) (Mus musculus (Mouse)).